The chain runs to 559 residues: Probable inorganic carbon transporter subunit DabB1 (559 aa).

The next 13 helical transmembrane spans lie at 4-24, 33-53, 76-96, 106-126, 173-193, 202-222, 240-260, 273-293, 310-330, 375-395, 408-428, 440-460, and 487-507; these read LQWL…LFAA, LSVA…VAYI, LSSI…VYSI, PRFF…VAAG, LVLA…PTLF, ATIM…LSAF, GPTP…GFII, VLHM…VLML, MGFM…FHLI, LPWL…LVIA, GAIV…FATH, MMIL…GHAF, and GLVF…YLAS.

Belongs to the inorganic carbon transporter (TC 9.A.2) DabB family. In terms of assembly, forms a complex with DabA1.

It is found in the cell inner membrane. Functionally, part of an energy-coupled inorganic carbon pump. The chain is Probable inorganic carbon transporter subunit DabB1 from Halothiobacillus neapolitanus (strain ATCC 23641 / c2) (Thiobacillus neapolitanus).